Here is a 644-residue protein sequence, read N- to C-terminus: DNA gyrase subunit B (644 aa).

Positions 429-543 (CEIFLVEGDS…AGYVYIAQPP (115 aa)) constitute a Toprim domain. Positions 435, 508, and 510 each coordinate Mg(2+).

This sequence belongs to the type II topoisomerase GyrB family. Heterotetramer, composed of two GyrA and two GyrB chains. In the heterotetramer, GyrA contains the active site tyrosine that forms a transient covalent intermediate with DNA, while GyrB binds cofactors and catalyzes ATP hydrolysis. Mg(2+) is required as a cofactor. The cofactor is Mn(2+). Requires Ca(2+) as cofactor.

The protein resides in the cytoplasm. The enzyme catalyses ATP-dependent breakage, passage and rejoining of double-stranded DNA.. Functionally, a type II topoisomerase that negatively supercoils closed circular double-stranded (ds) DNA in an ATP-dependent manner to modulate DNA topology and maintain chromosomes in an underwound state. Negative supercoiling favors strand separation, and DNA replication, transcription, recombination and repair, all of which involve strand separation. Also able to catalyze the interconversion of other topological isomers of dsDNA rings, including catenanes and knotted rings. Type II topoisomerases break and join 2 DNA strands simultaneously in an ATP-dependent manner. The polypeptide is DNA gyrase subunit B (Staphylococcus aureus (strain Mu50 / ATCC 700699)).